The following is a 620-amino-acid chain: EF-hand calcium-binding domain-containing protein 7 (620 aa).

The disordered stretch occupies residues M1–Q24. EF-hand domains are found at residues A98–K133 and M134–Q169. The tract at residues E176 to Y234 is disordered. A compositionally biased stretch (basic and acidic residues) spans F213–S225. The 36-residue stretch at E394 to E429 folds into the EF-hand 3 domain. Positions 407, 409, 411, and 418 each coordinate Ca(2+).

Its subcellular location is the cell projection. The protein localises to the cilium membrane. In terms of biological role, plays a role in the ciliary Hedgehog (Hh) signaling. The polypeptide is EF-hand calcium-binding domain-containing protein 7 (efcab7) (Xenopus laevis (African clawed frog)).